Reading from the N-terminus, the 542-residue chain is Chaperonin GroEL (542 aa).

Residues 29 to 32, K50, 86 to 90, G415, and D495 each bind ATP; these read TLGP and DGTTT.

It belongs to the chaperonin (HSP60) family. Forms a cylinder of 14 subunits composed of two heptameric rings stacked back-to-back. Interacts with the co-chaperonin GroES.

The protein localises to the cytoplasm. It carries out the reaction ATP + H2O + a folded polypeptide = ADP + phosphate + an unfolded polypeptide.. Functionally, together with its co-chaperonin GroES, plays an essential role in assisting protein folding. The GroEL-GroES system forms a nano-cage that allows encapsulation of the non-native substrate proteins and provides a physical environment optimized to promote and accelerate protein folding. In Flavobacterium psychrophilum (strain ATCC 49511 / DSM 21280 / CIP 103535 / JIP02/86), this protein is Chaperonin GroEL.